A 269-amino-acid polypeptide reads, in one-letter code: MPDFSMSNLAVAFSITLAAGLFTVLGSGLVMFSKTPNPRVLSFGLAFAGGAMVYVSLTEIFSKSSEAFAEIYDKDHAFAAATMAFLAGMGGIALIDRLVPNPHETLDAQDPSFQESKRRHIARVGMMAAFAITAHNFPEGLATFFATLENPAVGMPLALAIAIHNIPEGISIAAPVYFATRSRKKTVWACLLSGLAEPLGAALGYLVLQPFLSPAVFGSVFGVIAGVMVFLALDELLPAAKRYSDGHETVYGLTMGMAVIAVSLVLFHF.

8 helical membrane-spanning segments follow: residues Ala-12–Phe-32, Leu-41–Phe-61, Asp-75–Ile-95, Met-126–Ala-146, Ala-152–Ile-172, Val-187–Val-207, Phe-211–Leu-231, and Thr-249–Phe-269. Positions 136 and 139 each coordinate Fe(2+). Positions 139 and 164 each coordinate Zn(2+). Fe(2+)-binding residues include Asn-165, Glu-168, and Glu-197. A Zn(2+)-binding site is contributed by Glu-168.

Belongs to the ZIP transporter (TC 2.A.5) family. ZupT subfamily.

It localises to the cell inner membrane. It catalyses the reaction Zn(2+)(in) = Zn(2+)(out). Mediates zinc uptake. May also transport other divalent cations. The sequence is that of Zinc transporter ZupT from Neisseria meningitidis serogroup A / serotype 4A (strain DSM 15465 / Z2491).